Consider the following 342-residue polypeptide: L-threonine 3-dehydrogenase (342 aa).

C38 is a binding site for Zn(2+). Residues T40 and H43 each act as charge relay system in the active site. Zn(2+) is bound by residues H63, E64, C93, C96, C99, and C107. Residues I175, D195, R200, 262–264 (LGI), and 286–287 (IY) each bind NAD(+).

Belongs to the zinc-containing alcohol dehydrogenase family. In terms of assembly, homotetramer. The cofactor is Zn(2+).

The protein resides in the cytoplasm. It catalyses the reaction L-threonine + NAD(+) = (2S)-2-amino-3-oxobutanoate + NADH + H(+). It participates in amino-acid degradation; L-threonine degradation via oxydo-reductase pathway; glycine from L-threonine: step 1/2. In terms of biological role, catalyzes the NAD(+)-dependent oxidation of L-threonine to 2-amino-3-ketobutyrate. The polypeptide is L-threonine 3-dehydrogenase (Aeromonas salmonicida (strain A449)).